Here is a 350-residue protein sequence, read N- to C-terminus: tRNA uridine(34) hydroxylase (350 aa).

Positions 146 to 240 (DDPDALFIDM…YARKARDQGL (95 aa)) constitute a Rhodanese domain. Cysteine 200 serves as the catalytic Cysteine persulfide intermediate.

It belongs to the TrhO family.

The enzyme catalyses uridine(34) in tRNA + AH2 + O2 = 5-hydroxyuridine(34) in tRNA + A + H2O. In terms of biological role, catalyzes oxygen-dependent 5-hydroxyuridine (ho5U) modification at position 34 in tRNAs, the first step in 5-carboxymethoxyuridine (cmo5U) biosynthesis. May be part of an alternate pathway, which is able to bypass cmo5U biogenesis in a subset of tRNAs under aerobic conditions. This Escherichia coli O6:K15:H31 (strain 536 / UPEC) protein is tRNA uridine(34) hydroxylase.